The primary structure comprises 104 residues: Pyrimidine/purine nucleoside phosphorylase (104 aa).

The protein belongs to the nucleoside phosphorylase PpnP family.

The catalysed reaction is a purine D-ribonucleoside + phosphate = a purine nucleobase + alpha-D-ribose 1-phosphate. The enzyme catalyses adenosine + phosphate = alpha-D-ribose 1-phosphate + adenine. It catalyses the reaction cytidine + phosphate = cytosine + alpha-D-ribose 1-phosphate. It carries out the reaction guanosine + phosphate = alpha-D-ribose 1-phosphate + guanine. The catalysed reaction is inosine + phosphate = alpha-D-ribose 1-phosphate + hypoxanthine. The enzyme catalyses thymidine + phosphate = 2-deoxy-alpha-D-ribose 1-phosphate + thymine. It catalyses the reaction uridine + phosphate = alpha-D-ribose 1-phosphate + uracil. It carries out the reaction xanthosine + phosphate = alpha-D-ribose 1-phosphate + xanthine. Its function is as follows. Catalyzes the phosphorolysis of diverse nucleosides, yielding D-ribose 1-phosphate and the respective free bases. Can use uridine, adenosine, guanosine, cytidine, thymidine, inosine and xanthosine as substrates. Also catalyzes the reverse reactions. In Geotalea daltonii (strain DSM 22248 / JCM 15807 / FRC-32) (Geobacter daltonii), this protein is Pyrimidine/purine nucleoside phosphorylase.